Consider the following 918-residue polypeptide: MADRKSDEGEDEYQHKEQMVTNRTSSFQPKSTEDSISKLAKMRAADRREEFMEERASFSAVKRGYQAGDDEEDDFTAEEEPPAKKPLTVAERLMAAMGHKAGEGLGKHGQGISEPIASSTQRGRTGLGHNAGKATARDFNEVWDETTEEKTVVERVEWMTDIEEEKRAEICEQLKDDKWMVIGKEKRTIDDETKFCSQQSITEMIEAKNVFDLMSDKDLREARTRANPYETIGSAFFQNRAAMKTANMDKIYDWILSRENTENDRFLLKNPLQESQTAENVDRSEDLFYFADVCAGPGGFSEYMLWRKGFYNAKGFGFTLAGKDDFKLFKFTASSQYFFETFYGTKDNGDVMDPVNIDSLEAHISRGTSGLGVHLMMADGGFSVEGQENIQEILSKRLYLCQLLVSLCIVREGGNFFCKLFDIFTPFSVGLIYLMRVCYQSVSLHKPHTSRPANSERYITCKGLRKEFANVVKEYLKRVNRKLDELKNKKSHDDVTDLMPLDVIEADQIFMDEIIRHNEFLANRQTLYLRKYQSFAKNQGQFDKDQGNLRDECLKYWQVPNKQRPRGGDRGNRHDNMQRLNPLQVYGKYCKKVCGESEIGNTFPDFSLNCLDAPLPNIPYEEYRFVPLASSGSPNLLIAAGDSAFIFRSGRFESISADHIRIPENTILLVDWAEEVVRGDGNRIKISSEPQVVRIIDAAVLFGDDVSNLPYEERMKAAEKFVAALKQTNRKVKKGWGHRAEMIKPHLKICAKTYSLAELDEFRSNLEKLEHNRELAVLFTEGEFTFRCQALRFTRIIKQEWRMGWSKSQQKPYAHSQEHQNAGSIPVELWAEKSIYSSFWDSVICLNKDKKKLMEAMEHTKGKCPIPSSIWSWKACIRTPYGPEKILNYPEPFEGKPTIAALKAQIENTDLIVKRVRN.

The segment covering 1–18 (MADRKSDEGEDEYQHKEQ) has biased composition (basic and acidic residues). Disordered regions lie at residues 1–56 (MADR…EERA) and 62–81 (KRGYQAGDDEEDDFTAEEEP). The span at 19-30 (MVTNRTSSFQPK) shows a compositional bias: polar residues. Residues 43 to 56 (RAADRREEFMEERA) show a composition bias toward basic and acidic residues. Residues 68–80 (GDDEEDDFTAEEE) are compositionally biased toward acidic residues. Residues 86 to 132 (PLTVAERLMAAMGHKAGEGLGKHGQGISEPIASSTQRGRTGLGHNAG) enclose the G-patch domain. The RrmJ-type SAM-dependent 2'-O-MTase domain occupies 236–465 (FFQNRAAMKT…ERYITCKGLR (230 aa)). G298 and D379 together coordinate S-adenosyl-L-methionine. Catalysis depends on K419, which acts as the Proton acceptor.

The catalysed reaction is a 5'-end (N(7)-methyl 5'-triphosphoguanosine)-ribonucleoside in mRNA + S-adenosyl-L-methionine = a 5'-end (N(7)-methyl 5'-triphosphoguanosine)-(2'-O-methyl-ribonucleoside) in mRNA + S-adenosyl-L-homocysteine + H(+). In terms of biological role, S-adenosyl-L-methionine-dependent methyltransferase that mediates mRNA cap1 2'-O-ribose methylation to the 5'-cap structure of mRNAs. Methylates the ribose of the first nucleotide of a m(7)GpppG-capped mRNA to produce m(7)GpppNmp (cap1). Cap1 modification is linked to higher levels of translation. The polypeptide is Cap-specific mRNA (nucleoside-2'-O-)-methyltransferase 1 (Caenorhabditis elegans).